The sequence spans 889 residues: DNA mismatch repair protein MutS (889 aa).

ATP is bound at residue 641-648 (GPNMAGKS).

This sequence belongs to the DNA mismatch repair MutS family.

Functionally, this protein is involved in the repair of mismatches in DNA. It is possible that it carries out the mismatch recognition step. This protein has a weak ATPase activity. The chain is DNA mismatch repair protein MutS from Orientia tsutsugamushi (strain Boryong) (Rickettsia tsutsugamushi).